We begin with the raw amino-acid sequence, 398 residues long: Diaminopropionate ammonia-lyase (398 aa).

K77 carries the N6-(pyridoxal phosphate)lysine modification.

It belongs to the diaminopropionate ammonia-lyase family. Homodimer. The cofactor is pyridoxal 5'-phosphate.

The catalysed reaction is (S)-2,3-diaminopropanoate + H2O + H(+) = pyruvate + 2 NH4(+). It carries out the reaction (R)-2,3-diaminopropanoate + H2O + H(+) = pyruvate + 2 NH4(+). Its function is as follows. Catalyzes the alpha,beta-elimination reaction of both L- and D-alpha,beta-diaminopropionate (DAP) to form pyruvate and ammonia. The D-isomer of serine is degraded to pyruvate, though very poorly; other amino acids (L-serine, D- and L-threonine, D- and L-beta-Cl-alanine) are not substrates. This chain is Diaminopropionate ammonia-lyase (ygeX), found in Escherichia coli O157:H7.